Here is a 150-residue protein sequence, read N- to C-terminus: Ribosome maturation factor RimP (150 aa).

It belongs to the RimP family.

The protein localises to the cytoplasm. Functionally, required for maturation of 30S ribosomal subunits. The chain is Ribosome maturation factor RimP from Francisella philomiragia subsp. philomiragia (strain ATCC 25017 / CCUG 19701 / FSC 153 / O#319-036).